Consider the following 284-residue polypeptide: Putative ABC transporter ATP-binding protein MG468.1 homolog (284 aa).

One can recognise an ABC transporter domain in the interval 53 to 284; the sequence is VLFKGVCKAV…PKTINEINWV (232 aa). ATP is bound at residue 89 to 96; it reads GKSGSGKT.

This sequence belongs to the ABC transporter superfamily.

This chain is Putative ABC transporter ATP-binding protein MG468.1 homolog, found in Mycoplasma pneumoniae (strain ATCC 29342 / M129 / Subtype 1) (Mycoplasmoides pneumoniae).